Here is a 74-residue protein sequence, read N- to C-terminus: Molt-inhibiting hormone (74 aa).

Pyrrolidone carboxylic acid is present on Q1. Disulfide bonds link C7–C43, C23–C39, and C26–C52. Valine amide is present on V72.

The protein resides in the secreted. Functionally, inhibits Y-organs where molting hormone (ecdysteroid) is secreted. A molting cycle is initiated when MIH secretion diminishes or stops. In Procambarus bouvieri (Mexican crayfish), this protein is Molt-inhibiting hormone.